The primary structure comprises 394 residues: Acetate kinase (394 aa).

Asn-7 contributes to the Mg(2+) binding site. Lys-14 is a binding site for ATP. Substrate is bound at residue Arg-90. The active-site Proton donor/acceptor is Asp-147. ATP is bound by residues His-204–Gly-208, Asp-278–Arg-280, and Gly-326–Asn-330. Glu-380 contributes to the Mg(2+) binding site.

Belongs to the acetokinase family. In terms of assembly, homodimer. Mg(2+) is required as a cofactor. The cofactor is Mn(2+).

It localises to the cytoplasm. The enzyme catalyses acetate + ATP = acetyl phosphate + ADP. Its pathway is metabolic intermediate biosynthesis; acetyl-CoA biosynthesis; acetyl-CoA from acetate: step 1/2. Functionally, catalyzes the formation of acetyl phosphate from acetate and ATP. Can also catalyze the reverse reaction. This is Acetate kinase from Flavobacterium johnsoniae (strain ATCC 17061 / DSM 2064 / JCM 8514 / BCRC 14874 / CCUG 350202 / NBRC 14942 / NCIMB 11054 / UW101) (Cytophaga johnsonae).